The chain runs to 263 residues: Aminoglycoside (3'') (9) adenylyltransferase (263 aa).

The catalysed reaction is streptomycin + ATP = 3''-O-adenylylstreptomycin + diphosphate. The enzyme catalyses spectinomycin + ATP = 9-O-adenylylspectinomycin + diphosphate. Its function is as follows. Mediates bacterial resistance to the antibiotics streptomycin and spectinomycin. The sequence is that of Aminoglycoside (3'') (9) adenylyltransferase from Escherichia coli.